A 1219-amino-acid chain; its full sequence is Protein jagged-1 (1219 aa).

Residues 1 to 33 form the signal peptide; sequence MRSPRTRGRPGRPLSLLLALLCALRAKVCGASG. Over 34–1067 the chain is Extracellular; sequence QFELEILSMQ…QRRPLKNRTD (1034 aa). N-linked (GlcNAc...) asparagine glycosylation is present at asparagine 143. Positions 185 to 229 constitute a DSL domain; that stretch reads VTCDDHYYGFGCNKFCRPRDDFFGHYACDQNGNKTCMEGWMGPEC. Disulfide bonds link cysteine 187-cysteine 196 and cysteine 200-cysteine 212. The important for interaction with NOTCH1 stretch occupies residues 199–207; sequence FCRPRDDFF. An N-linked (GlcNAc...) asparagine glycan is attached at asparagine 217. 40 cysteine pairs are disulfide-bonded: cysteine 220–cysteine 229, cysteine 234–cysteine 245, cysteine 238–cysteine 251, cysteine 253–cysteine 262, cysteine 265–cysteine 276, cysteine 271–cysteine 282, cysteine 284–cysteine 293, cysteine 300–cysteine 312, cysteine 306–cysteine 322, cysteine 324–cysteine 333, cysteine 340–cysteine 351, cysteine 345–cysteine 360, cysteine 362–cysteine 371, cysteine 378–cysteine 389, cysteine 383–cysteine 398, cysteine 400–cysteine 409, cysteine 416–cysteine 427, cysteine 421–cysteine 436, cysteine 438–cysteine 447, cysteine 454–cysteine 464, cysteine 458–cysteine 473, cysteine 475–cysteine 484, cysteine 491–cysteine 502, cysteine 496–cysteine 511, cysteine 513–cysteine 522, cysteine 529–cysteine 540, cysteine 534–cysteine 549, cysteine 551–cysteine 560, cysteine 578–cysteine 605, cysteine 599–cysteine 615, cysteine 617–cysteine 626, cysteine 633–cysteine 644, cysteine 638–cysteine 653, cysteine 655–cysteine 664, cysteine 671–cysteine 682, cysteine 676–cysteine 691, cysteine 693–cysteine 702, cysteine 709–cysteine 720, cysteine 714–cysteine 729, and cysteine 731–cysteine 740. Residues 230 to 263 enclose the EGF-like 1 domain; sequence NKAICRQGCSPKHGSCKLPGDCRCQYGWQGLYCD. The 31-residue stretch at 264-294 folds into the EGF-like 2; atypical domain; that stretch reads KCIPHPGCVHGTCNEPWQCLCETNWGGQLCD. 2 consecutive EGF-like domains span residues 296 to 334 and 336 to 372; these read DLNYCGTHQPCLNRGTCSNTGPDKYQCSCPEGYSGPNCE and AEHACLSDPCHNRGSCKETSSGFECECSPGWTGPTCS. Residues 374–410 enclose the EGF-like 5; calcium-binding domain; it reads NIDDCSPNNCSHGGTCQDLVNGFKCVCPPQWTGKTCQ. Asparagine 382 carries an N-linked (GlcNAc...) asparagine glycan. One can recognise an EGF-like 6; calcium-binding domain in the interval 412 to 448; it reads DANECEAKPCVNARSCKNLIASYYCDCLPGWMGQNCD. The EGF-like 7; calcium-binding domain occupies 450–485; the sequence is NINDCLGQCQNDASCRDLVNGYRCICPPGYAGDHCE. The region spanning 487 to 523 is the EGF-like 8; calcium-binding domain; sequence DIDECASNPCLNGGHCQNEINRFQCLCPTGFSGNLCQ. EGF-like domains lie at 525–561 and 586–627; these read DIDYCEPNPCQNGAQCYNRASDYFCKCPEDYEGKNCS and DTPE…TYCH. N-linked (GlcNAc...) asparagine glycosylation occurs at asparagine 559. An EGF-like 11; calcium-binding domain is found at 629–665; the sequence is NINDCEGNPCTNGGTCIDGVNSYKCICSDGWEGAHCE. One can recognise an EGF-like 12; calcium-binding domain in the interval 667–703; that stretch reads NINDCSQNPCHYGGTCRDLVNDFYCDCKNGWKGKTCH. EGF-like domains lie at 705–741 and 744–780; these read RDSQCDEATCNNGGTCYDEVDTFKCMCPGGWEGTTCN and RNSSCLPNPCHNGGTCVVNGDSFTCVCKEGWEGPICT. Asparagine 745 is a glycosylation site (N-linked (GlcNAc...) asparagine). Disulfide bonds link cysteine 748–cysteine 759, cysteine 753–cysteine 768, cysteine 770–cysteine 779, cysteine 786–cysteine 797, cysteine 791–cysteine 806, cysteine 808–cysteine 817, cysteine 824–cysteine 835, cysteine 829–cysteine 844, cysteine 846–cysteine 855, cysteine 925–cysteine 936, and cysteine 948–cysteine 958. The EGF-like 15; calcium-binding domain maps to 782-818; the sequence is NTNDCSPHPCYNSGTCVDGDNWYRCECAPGFAGPDCR. An EGF-like 16; calcium-binding domain is found at 820–856; sequence NINECQSSPCAFGATCVDEINGYQCICPPGHSGAKCH. 4 N-linked (GlcNAc...) asparagine glycosylation sites follow: asparagine 960, asparagine 991, asparagine 1045, and asparagine 1064. Residues 1068–1093 traverse the membrane as a helical segment; sequence FLVPLLSSVLTVAWVCCLVTAFYWCV. At 1094 to 1219 the chain is on the cytoplasmic side; that stretch reads RKRRRKPSSH…QSLNRMEYIV (126 aa). The segment at 1182–1219 is disordered; it reads REEKVPQRTPTKHPNWTNKQDNRDLESAQSLNRMEYIV. Over residues 1189-1200 the composition is skewed to polar residues; it reads RTPTKHPNWTNK.

As to quaternary structure, interacts with NOTCH1. Interacts with NOTCH2 and NOTCH3. In terms of tissue distribution, widely expressed in a variety of tissues.

Its subcellular location is the membrane. It is found in the cell membrane. Functionally, ligand for multiple Notch receptors and involved in the mediation of Notch signaling. May be involved in cell-fate decisions during hematopoiesis. Enhances fibroblast growth factor-induced angiogenesis (in vitro). Seems to be involved in early and late stages of mammalian cardiovascular development. Inhibits myoblast differentiation. May regulate fibroblast growth factor-induced angiogenesis. This Rattus norvegicus (Rat) protein is Protein jagged-1 (Jag1).